Reading from the N-terminus, the 737-residue chain is Protein bicaudal D homolog (737 aa).

Coiled coils occupy residues 1–255, 292–319, and 547–684; these read MAES…RNAE, GSSD…EKIF, and AENE…DRDR. The tract at residues 72-97 is disordered; the sequence is YRSQHQRSTRSELENEESLLEESSAK. The disordered stretch occupies residues 686-737; it reads VFKRSSTRAPTRETYQPPRAVRYPGSTTTAQQPAPSSSGGSRGGPRRGDNQQ. The segment covering 710 to 719 has biased composition (polar residues); sequence GSTTTAQQPA.

This sequence belongs to the BicD family. In terms of assembly, component of a dynein-regulating complex composed of at least bicd-1, dlc-1 and egal-1. Interacts with egal-1 and unc-83. As to expression, expressed in the excretory cell, body wall muscles, vulval muscle cells, PVD and FLP sensory neurons and AVF interneurons.

The protein localises to the nucleus envelope. Its subcellular location is the perikaryon. The protein resides in the cell projection. It is found in the dendrite. Part of a complex with dlc-1 and egal-1, which is recruited to the nuclear envelope by unc-83, where in turn, it recruits dynein to the nuclear surface and regulates nuclear migration in hypodermal precursor cells. Required for the formation of dendritic branches of PVD sensory neurons. In Caenorhabditis elegans, this protein is Protein bicaudal D homolog.